Here is a 718-residue protein sequence, read N- to C-terminus: Neutral ceramidase B (718 aa).

The signal sequence occupies residues 1 to 20 (MINSFKKLIILISLVIILLS). N-linked (GlcNAc...) asparagine glycans are attached at residues N224 and N252. The active-site Nucleophile is the S298. 8 N-linked (GlcNAc...) asparagine glycosylation sites follow: N358, N378, N391, N421, N422, N577, N610, and N614.

It belongs to the neutral ceramidase family.

The protein resides in the secreted. It catalyses the reaction an N-acylsphing-4-enine + H2O = sphing-4-enine + a fatty acid. Hydrolyzes the sphingolipid ceramide into sphingosine and free fatty acid. The polypeptide is Neutral ceramidase B (dcd2B) (Dictyostelium discoideum (Social amoeba)).